The chain runs to 200 residues: Small ribosomal subunit protein uS4 (200 aa).

The disordered stretch occupies residues 22 to 42 (TGKELEKRPYAPGPHGPNQRK). The S4 RNA-binding domain maps to 92 to 152 (ARLDNLVYRM…EKSNNLVVVK (61 aa)).

It belongs to the universal ribosomal protein uS4 family. Part of the 30S ribosomal subunit. Contacts protein S5. The interaction surface between S4 and S5 is involved in control of translational fidelity.

In terms of biological role, one of the primary rRNA binding proteins, it binds directly to 16S rRNA where it nucleates assembly of the body of the 30S subunit. With S5 and S12 plays an important role in translational accuracy. In Bacillus thuringiensis subsp. konkukian (strain 97-27), this protein is Small ribosomal subunit protein uS4.